Here is an 85-residue protein sequence, read N- to C-terminus: Large ribosomal subunit protein bL27 (85 aa).

Positions 1 to 21 (MAHKKGGGTTRNGRDSESKRL) are disordered.

The protein belongs to the bacterial ribosomal protein bL27 family.

This Janthinobacterium sp. (strain Marseille) (Minibacterium massiliensis) protein is Large ribosomal subunit protein bL27.